The sequence spans 205 residues: MFLRHVIVFSFIALLAGCAGFGARESVEGHGNPAQWAANKQHLTGLDGWQIDGKIGIRAPKDSGSGTLFWLQRQDYYDIRLSGPLGRGAARLTGRPGAVSLEVANQGRYEAPTPEALVEEQLGWKLPVSHLAWWVRGLPAPDSKSRLTLDGNSRLANLDQDGWQVEYLSYAEQNGYWLPERIKLHGSDLDVTLVIKTWQPRKLGQ.

The signal sequence occupies residues methionine 1–glycine 17. The N-palmitoyl cysteine moiety is linked to residue cysteine 18. The S-diacylglycerol cysteine moiety is linked to residue cysteine 18.

The protein belongs to the LolB family. Monomer.

The protein localises to the cell outer membrane. Functionally, plays a critical role in the incorporation of lipoproteins in the outer membrane after they are released by the LolA protein. This chain is Outer-membrane lipoprotein LolB, found in Pseudomonas fluorescens (strain Pf0-1).